The chain runs to 158 residues: Ribosomal RNA large subunit methyltransferase H (158 aa).

S-adenosyl-L-methionine is bound by residues Leu-74, Gly-105, and 124-129 (LGPLTL).

It belongs to the RNA methyltransferase RlmH family. Homodimer.

It is found in the cytoplasm. The catalysed reaction is pseudouridine(1915) in 23S rRNA + S-adenosyl-L-methionine = N(3)-methylpseudouridine(1915) in 23S rRNA + S-adenosyl-L-homocysteine + H(+). Its function is as follows. Specifically methylates the pseudouridine at position 1915 (m3Psi1915) in 23S rRNA. This chain is Ribosomal RNA large subunit methyltransferase H, found in Xylella fastidiosa (strain 9a5c).